Consider the following 250-residue polypeptide: Histidine utilization repressor (250 aa).

An HTH gntR-type domain is found at 20-88 (APLYARVKQM…QGVGTFVAEP (69 aa)). The H-T-H motif DNA-binding region spans 48 to 67 (ESELVSQLGFSRMTINRALR).

The protein operates within amino-acid degradation; L-histidine degradation into L-glutamate [regulation]. Its function is as follows. Repressor which binds to the hutP region in the histidine utilization (hut) operon. It blocks the expression of all the hut genes in the absence of inducer. The sequence is that of Histidine utilization repressor (hutC) from Pseudomonas aeruginosa (strain ATCC 15692 / DSM 22644 / CIP 104116 / JCM 14847 / LMG 12228 / 1C / PRS 101 / PAO1).